The chain runs to 31 residues: Cytochrome b6-f complex subunit 6 (31 aa).

Residues 3-23 form a helical membrane-spanning segment; it reads IITSYFGFLLTALTIASALFI.

It belongs to the PetL family. In terms of assembly, the 4 large subunits of the cytochrome b6-f complex are cytochrome b6, subunit IV (17 kDa polypeptide, PetD), cytochrome f and the Rieske protein, while the 4 small subunits are PetG, PetL, PetM and PetN. The complex functions as a dimer.

It is found in the plastid. Its subcellular location is the chloroplast thylakoid membrane. Functionally, component of the cytochrome b6-f complex, which mediates electron transfer between photosystem II (PSII) and photosystem I (PSI), cyclic electron flow around PSI, and state transitions. PetL is important for photoautotrophic growth as well as for electron transfer efficiency and stability of the cytochrome b6-f complex. The protein is Cytochrome b6-f complex subunit 6 of Helianthus annuus (Common sunflower).